The sequence spans 408 residues: Putative F-box protein At1g53550 (408 aa).

The 46-residue stretch at 29–74 (TCYFDPIPVDLVINILSRLSLECIARCRCVSKLWSSIIRRPNYNQL) folds into the F-box domain.

This chain is Putative F-box protein At1g53550, found in Arabidopsis thaliana (Mouse-ear cress).